A 267-amino-acid chain; its full sequence is Apolipoprotein A-I (267 aa).

The N-terminal stretch at 1-18 (MKAAVLTLAVLFLTGSQA) is a signal peptide. 2 repeat units span residues 68 to 89 (LKLL…EDLG) and 90 to 111 (PVTQ…QEMS). A 10 X approximate tandem repeats region spans residues 68–267 (LKLLDNWDSL…EEYAKKLSSQ (200 aa)). M110 bears the Methionine sulfoxide mark. A 3; half-length repeat occupies 112–122 (KDLEEVKAKVQ). 5 consecutive repeat copies span residues 123 to 144 (PYLD…QKLE), 145 to 166 (PLRT…EKLS), 167 to 188 (PLAE…TQLA), 189 to 210 (PYSD…ESGG), and 211 to 232 (ASLA…EKAK). One copy of the 9; half-length repeat lies at 233-243 (PALEDLRQGLL). Repeat 10 spans residues 244-267 (PVLESFKVSFLSALEEYAKKLSSQ).

It belongs to the apolipoprotein A1/A4/E family. As to quaternary structure, homodimer. Interacts with APOA1BP and CLU. Component of a sperm activating protein complex (SPAP), consisting of APOA1, an immunoglobulin heavy chain, an immunoglobulin light chain and albumin. Interacts with NDRG1. Interacts with SCGB3A2. Interacts with NAXE and YJEFN3. Glycosylated. Post-translationally, palmitoylated. In terms of processing, phosphorylation sites are present in the extracellular medium.

It is found in the secreted. Functionally, participates in the reverse transport of cholesterol from tissues to the liver for excretion by promoting cholesterol efflux from tissues and by acting as a cofactor for the lecithin cholesterol acyltransferase (LCAT). As part of the SPAP complex, activates spermatozoa motility. This chain is Apolipoprotein A-I (APOA1), found in Cebus imitator (Panamanian white-faced capuchin).